The chain runs to 275 residues: Urease accessory protein UreD (275 aa).

This sequence belongs to the UreD family. UreD, UreF and UreG form a complex that acts as a GTP-hydrolysis-dependent molecular chaperone, activating the urease apoprotein by helping to assemble the nickel containing metallocenter of UreC. The UreE protein probably delivers the nickel.

The protein localises to the cytoplasm. Its function is as follows. Required for maturation of urease via the functional incorporation of the urease nickel metallocenter. The chain is Urease accessory protein UreD from Cereibacter sphaeroides (strain ATCC 17029 / ATH 2.4.9) (Rhodobacter sphaeroides).